A 1322-amino-acid chain; its full sequence is Phosphoribosylformylglycinamidine synthase (1322 aa).

ATP is bound by residues 307–318 and Ala-678; that span reads GASTGSGGEIRD. Positions 718, 722, and 886 each coordinate Mg(2+). The 254-residue stretch at 1069-1322 folds into the Glutamine amidotransferase type-1 domain; the sequence is MAILREQGVN…MFRNARVNLG (254 aa). Cys-1162 serves as the catalytic Nucleophile. Residues His-1287 and Glu-1289 contribute to the active site.

It in the N-terminal section; belongs to the FGAMS family. Monomer.

The protein resides in the cytoplasm. It carries out the reaction N(2)-formyl-N(1)-(5-phospho-beta-D-ribosyl)glycinamide + L-glutamine + ATP + H2O = 2-formamido-N(1)-(5-O-phospho-beta-D-ribosyl)acetamidine + L-glutamate + ADP + phosphate + H(+). The protein operates within purine metabolism; IMP biosynthesis via de novo pathway; 5-amino-1-(5-phospho-D-ribosyl)imidazole from N(2)-formyl-N(1)-(5-phospho-D-ribosyl)glycinamide: step 1/2. Functionally, phosphoribosylformylglycinamidine synthase involved in the purines biosynthetic pathway. Catalyzes the ATP-dependent conversion of formylglycinamide ribonucleotide (FGAR) and glutamine to yield formylglycinamidine ribonucleotide (FGAM) and glutamate. This chain is Phosphoribosylformylglycinamidine synthase, found in Photobacterium profundum (strain SS9).